Consider the following 647-residue polypeptide: DNA mismatch repair protein MutL (647 aa).

Positions 346–378 (QTVHAPRSAAPRVSERASDEPPAWQPSPTSGEP) are disordered.

This sequence belongs to the DNA mismatch repair MutL/HexB family.

In terms of biological role, this protein is involved in the repair of mismatches in DNA. It is required for dam-dependent methyl-directed DNA mismatch repair. May act as a 'molecular matchmaker', a protein that promotes the formation of a stable complex between two or more DNA-binding proteins in an ATP-dependent manner without itself being part of a final effector complex. This chain is DNA mismatch repair protein MutL, found in Limosilactobacillus fermentum (strain NBRC 3956 / LMG 18251) (Lactobacillus fermentum).